The chain runs to 171 residues: 3-hydroxydecanoyl-[acyl-carrier-protein] dehydratase (171 aa).

Histidine 69 is an active-site residue.

Belongs to the thioester dehydratase family. FabA subfamily. Homodimer.

Its subcellular location is the cytoplasm. The catalysed reaction is a (3R)-hydroxyacyl-[ACP] = a (2E)-enoyl-[ACP] + H2O. The enzyme catalyses (3R)-hydroxydecanoyl-[ACP] = (2E)-decenoyl-[ACP] + H2O. It carries out the reaction (2E)-decenoyl-[ACP] = (3Z)-decenoyl-[ACP]. The protein operates within lipid metabolism; fatty acid biosynthesis. Its function is as follows. Necessary for the introduction of cis unsaturation into fatty acids. Catalyzes the dehydration of (3R)-3-hydroxydecanoyl-ACP to E-(2)-decenoyl-ACP and then its isomerization to Z-(3)-decenoyl-ACP. Can catalyze the dehydratase reaction for beta-hydroxyacyl-ACPs with saturated chain lengths up to 16:0, being most active on intermediate chain length. The sequence is that of 3-hydroxydecanoyl-[acyl-carrier-protein] dehydratase from Caulobacter sp. (strain K31).